The sequence spans 211 residues: DNA-directed RNA polymerases I, II, and III subunit RPABC1 (211 aa).

It belongs to the archaeal Rpo5/eukaryotic RPB5 RNA polymerase subunit family. In terms of assembly, component of the RNA polymerase I (Pol I), RNA polymerase II (Pol II) and RNA polymerase III (Pol III) complexes consisting of at least 13, 12 and 17 subunits, respectively. In RNA Pol II, this subunit is present in 2-fold molar excess over the other subunits.

Its subcellular location is the nucleus. DNA-dependent RNA polymerase catalyzes the transcription of DNA into RNA using the four ribonucleoside triphosphates as substrates. Common component of RNA polymerases I, II and III which synthesize ribosomal RNA precursors, mRNA precursors and many functional non-coding RNAs, and small RNAs, such as 5S rRNA and tRNAs, respectively. Pol II is the central component of the basal RNA polymerase II transcription machinery. Pols are composed of mobile elements that move relative to each other. In Pol II, RPB5 is part of the lower jaw surrounding the central large cleft and thought to grab the incoming DNA template. Seems to be the major component in this process. The chain is DNA-directed RNA polymerases I, II, and III subunit RPABC1 from Caenorhabditis briggsae.